Reading from the N-terminus, the 977-residue chain is Alanine--tRNA ligase (977 aa).

Positions S512–S535 are disordered. Zn(2+) is bound by residues H618, H622, C720, and H724.

This sequence belongs to the class-II aminoacyl-tRNA synthetase family. Zn(2+) is required as a cofactor.

It localises to the cytoplasm. The catalysed reaction is tRNA(Ala) + L-alanine + ATP = L-alanyl-tRNA(Ala) + AMP + diphosphate. Its function is as follows. Catalyzes the attachment of alanine to tRNA(Ala) in a two-step reaction: alanine is first activated by ATP to form Ala-AMP and then transferred to the acceptor end of tRNA(Ala). Also edits incorrectly charged Ser-tRNA(Ala) and Gly-tRNA(Ala) via its editing domain. The chain is Alanine--tRNA ligase from Leptospira interrogans serogroup Icterohaemorrhagiae serovar Lai (strain 56601).